Consider the following 244-residue polypeptide: Phosphoadenosine 5'-phosphosulfate reductase (244 aa).

The Nucleophile; cysteine thiosulfonate intermediate role is filled by Cys239.

Belongs to the PAPS reductase family. CysH subfamily.

Its subcellular location is the cytoplasm. It carries out the reaction [thioredoxin]-disulfide + sulfite + adenosine 3',5'-bisphosphate + 2 H(+) = [thioredoxin]-dithiol + 3'-phosphoadenylyl sulfate. It functions in the pathway sulfur metabolism; hydrogen sulfide biosynthesis; sulfite from sulfate: step 3/3. Catalyzes the formation of sulfite from phosphoadenosine 5'-phosphosulfate (PAPS) using thioredoxin as an electron donor. This is Phosphoadenosine 5'-phosphosulfate reductase from Pectobacterium atrosepticum (strain SCRI 1043 / ATCC BAA-672) (Erwinia carotovora subsp. atroseptica).